The sequence spans 457 residues: Argininosuccinate lyase (457 aa).

The protein belongs to the lyase 1 family. Argininosuccinate lyase subfamily.

It is found in the cytoplasm. It carries out the reaction 2-(N(omega)-L-arginino)succinate = fumarate + L-arginine. It participates in amino-acid biosynthesis; L-arginine biosynthesis; L-arginine from L-ornithine and carbamoyl phosphate: step 3/3. This chain is Argininosuccinate lyase, found in Yersinia pseudotuberculosis serotype O:3 (strain YPIII).